The sequence spans 222 residues: Pyridoxine/pyridoxamine 5'-phosphate oxidase (222 aa).

Residues 16-19 (RVSY) and K75 each bind substrate. Residues 70–75 (RTVLCK), 85–86 (FT), K92, and Q114 contribute to the FMN site. Residues Y132, R136, and S140 each contribute to the substrate site. FMN contacts are provided by residues 149–150 (QS) and W195. 201 to 203 (RLH) is a substrate binding site. Residue R205 coordinates FMN.

It belongs to the pyridoxamine 5'-phosphate oxidase family. Homodimer. FMN serves as cofactor.

It catalyses the reaction pyridoxamine 5'-phosphate + O2 + H2O = pyridoxal 5'-phosphate + H2O2 + NH4(+). It carries out the reaction pyridoxine 5'-phosphate + O2 = pyridoxal 5'-phosphate + H2O2. The protein operates within cofactor metabolism; pyridoxal 5'-phosphate salvage; pyridoxal 5'-phosphate from pyridoxamine 5'-phosphate: step 1/1. It functions in the pathway cofactor metabolism; pyridoxal 5'-phosphate salvage; pyridoxal 5'-phosphate from pyridoxine 5'-phosphate: step 1/1. In terms of biological role, catalyzes the oxidation of either pyridoxine 5'-phosphate (PNP) or pyridoxamine 5'-phosphate (PMP) into pyridoxal 5'-phosphate (PLP). This chain is Pyridoxine/pyridoxamine 5'-phosphate oxidase, found in Saccharopolyspora erythraea (strain ATCC 11635 / DSM 40517 / JCM 4748 / NBRC 13426 / NCIMB 8594 / NRRL 2338).